A 259-amino-acid polypeptide reads, in one-letter code: Tryptophan synthase alpha chain (259 aa).

Catalysis depends on proton acceptor residues Glu-42 and Asp-53.

This sequence belongs to the TrpA family. In terms of assembly, tetramer of two alpha and two beta chains.

The catalysed reaction is (1S,2R)-1-C-(indol-3-yl)glycerol 3-phosphate + L-serine = D-glyceraldehyde 3-phosphate + L-tryptophan + H2O. It functions in the pathway amino-acid biosynthesis; L-tryptophan biosynthesis; L-tryptophan from chorismate: step 5/5. Functionally, the alpha subunit is responsible for the aldol cleavage of indoleglycerol phosphate to indole and glyceraldehyde 3-phosphate. In Erythrobacter litoralis (strain HTCC2594), this protein is Tryptophan synthase alpha chain.